Consider the following 81-residue polypeptide: Small ribosomal subunit protein bS16 (81 aa).

The protein belongs to the bacterial ribosomal protein bS16 family.

This chain is Small ribosomal subunit protein bS16, found in Desulfotalea psychrophila (strain LSv54 / DSM 12343).